We begin with the raw amino-acid sequence, 215 residues long: Ribonuclease T (215 aa).

The region spanning 20–194 (VVIDVETAGF…YDTLQTAKLF (175 aa)) is the Exonuclease domain. Residues Asp23, Glu25, His181, and Asp186 each coordinate Mg(2+). His181 functions as the Proton donor/acceptor in the catalytic mechanism.

The protein belongs to the RNase T family. Homodimer. Mg(2+) serves as cofactor.

Functionally, trims short 3' overhangs of a variety of RNA species, leaving a one or two nucleotide 3' overhang. Responsible for the end-turnover of tRNA: specifically removes the terminal AMP residue from uncharged tRNA (tRNA-C-C-A). Also appears to be involved in tRNA biosynthesis. The polypeptide is Ribonuclease T (Yersinia pseudotuberculosis serotype O:1b (strain IP 31758)).